Here is a 1587-residue protein sequence, read N- to C-terminus: Sister chromatid cohesion protein mis4 (1587 aa).

Residues 140 to 172 (PKEKPDASSINTNRSSSDNGFLTPSSSPRSPSC) are disordered. Polar residues predominate over residues 147-162 (SSINTNRSSSDNGFLT). A compositionally biased stretch (low complexity) spans 163-172 (PSSSPRSPSC). Residue S183 is modified to Phosphoserine. HEAT repeat units follow at residues 775–812 (LNLKFFVSLIIGFLDSPQASLRTKCLRIINQMKTIPSI), 814–851 (RTHPEVLAQIISKSNDQSAIVRDTVLDLLGTYIMAYRE), 853–888 (IPQIYGCIISGISDPSTIVRKRAIKQLCEVYEATED), 890–927 (NIRVDIASKLLTRSNDEEETISELSLEVLEKLWFSPAS), 1101–1140 (ATLMEIVPCLCSLFTRLNDYERLKKIVVSCLKSLEEARHS), and 1183–1220 (DAYVILLGYFQKLLKDAKGQLRIHIIDNMSRICLRETS).

The protein belongs to the SCC2/Nipped-B family. In terms of assembly, interacts with ssl3.

The protein localises to the nucleus. It is found in the chromosome. Functionally, plays a structural role in chromatin. Chromatid cohesion molecule required for equal sister chromatid separation in anaphase. May form a stable link between chromatids in S phase that is split rather than removed in anaphase. Also required for spindle-kinetochore interaction in early mitosis and inhibit sister chromatid separation until the cleavage of Rad21 in anaphase. The sequence is that of Sister chromatid cohesion protein mis4 (mis4) from Schizosaccharomyces pombe (strain 972 / ATCC 24843) (Fission yeast).